A 754-amino-acid chain; its full sequence is Bifunctional sesterterpene synthase astC (754 aa).

An N-terminal signal peptide occupies residues 1 to 24 (MASLEVFVLYLRIFFISFMSRARS). Residues 58–388 (IQYRHSKLVD…RYHFHKPEHW (331 aa)) are sesterterpene synthase. 2 residues coordinate Mg(2+): aspartate 149 and aspartate 153. A geranylfarnesyl diphosphate synthase region spans residues 389 to 753 (RQVENVDDDG…LRLLLKRLHV (365 aa)). The segment covering 392-403 (ENVDDDGNKSDD) has biased composition (basic and acidic residues). Residues 392 to 414 (ENVDDDGNKSDDSGIAMKDSPES) are disordered. Mg(2+) is bound by residues aspartate 512 and aspartate 516.

It in the N-terminal section; belongs to the terpene synthase family. This sequence in the C-terminal section; belongs to the FPP/GGPP synthase family. The cofactor is Mg(2+).

The enzyme catalyses (2E,6E,10E,14E)-geranylfarnesyl diphosphate = preasperterpenoid A + diphosphate. Its pathway is secondary metabolite biosynthesis; terpenoid biosynthesis. Bifunctional sesterterpene synthase; part of the gene cluster that mediates the biosynthesis of the asperterpenoids, sesterterpenes that exhibit anti-tuberculosis activity. The first step of the pathway is performed by the sesterterpene synthase astC that possesses both prenyl transferase and terpene cyclase activity, converting isopentenyl diphosphate and dimethylallyl diphosphate into geranylfarnesyl diphosphate (GFPP) and further converting GFPP into preasperterpenoid A, respectively. The cytochrome P450 monooxygenase astB then dually oxidizes preasperterpenoid A to produce asperterpenoid A along with a minor product, asperterpenoid B. Finally, the cytochrome P450 monooxygenase astA converts asperterpenoid A into asperterpenoid C. The sequence is that of Bifunctional sesterterpene synthase astC from Talaromyces wortmannii (Penicillium wortmannii).